Reading from the N-terminus, the 90-residue chain is Putative membrane protein insertion efficiency factor (90 aa).

A disordered region spans residues 68-90 (VPAHFSLRRNPQYKEEDHRGKKR). Positions 79 to 90 (QYKEEDHRGKKR) are enriched in basic and acidic residues.

Belongs to the UPF0161 family.

It is found in the cell membrane. In terms of biological role, could be involved in insertion of integral membrane proteins into the membrane. This Lactiplantibacillus plantarum (strain ATCC BAA-793 / NCIMB 8826 / WCFS1) (Lactobacillus plantarum) protein is Putative membrane protein insertion efficiency factor.